The sequence spans 354 residues: Threonine synthase (354 aa).

Lysine 61 is subject to N6-(pyridoxal phosphate)lysine. Pyridoxal 5'-phosphate-binding positions include asparagine 87, glycine 187–asparagine 191, and threonine 316.

It belongs to the threonine synthase family. Requires pyridoxal 5'-phosphate as cofactor.

The catalysed reaction is O-phospho-L-homoserine + H2O = L-threonine + phosphate. Its pathway is amino-acid biosynthesis; L-threonine biosynthesis; L-threonine from L-aspartate: step 5/5. Catalyzes the gamma-elimination of phosphate from L-phosphohomoserine and the beta-addition of water to produce L-threonine. This Halalkalibacterium halodurans (strain ATCC BAA-125 / DSM 18197 / FERM 7344 / JCM 9153 / C-125) (Bacillus halodurans) protein is Threonine synthase (thrC).